An 859-amino-acid chain; its full sequence is MFTLAEVASLNDIQPTYRILKPWWDVFMDYLAVVMLMVAIFAGTMQLTKDQVVCLPVLPSPANSKAHTPPGNADITTEVPRMETATHQDQNGQTTTNDVAFGTSAVTPDIPLQATHPHAESTLPNQEAKKEKRDPTGRKTNLDFQQYVFINQMCYHLALPWYSKYFPYLALIHTIILMVSSNFWFKYPKTCSKVEHFVSILGKCFESPWTTKALSETACEDSEENKQRITGAQTLPKHVSTSSDEGSPSASTPMINKTGFKFSAEKPVIEVPSMTILDKKDGEQAKALFEKVRKFRAHVEDSDLIYKLYVVQTLIKTAKFIFILCYTANFVNAISFEHVCKPKVEHLTGYEVFECTHNMAYMLKKLLISYISIICVYGFICLYTLFWLFRIPLKEYSFEKVREESSFSDIPDVKNDFAFLLHMVDQYDQLYSKRFGVFLSEVSENKLREISLNHEWTFEKLRQHVSRNAQDKQELHLFMLSGVPDAVFDLTDLDVLKLELIPEAKIPAKISQMTNLQELHLCHCPAKVEQTAFSFLRDHLRCLHVKFTDVAEIPAWVYLLKNLRELYLIGNLNSENNKMIGLESLRELRHLKILHVKSNLTKVPSNITDVAPHLTKLVIHNDGTKLLVLNSLKKMMNVAELELQNCELERIPHAIFSLSNLQELDLKSNNIRTIEEIISFQHLKRLTCLKLWHNKIVAIPPSITHVKNLESLYFSNNKLESLPTAVFSLQKLRCLDVSYNNISTIPIEIGLLQNLQHLHITGNKVDILPKQLFKCVKLRTLNLGQNCIASLPEKISQLTQLTQLELKGNCLDRLPAQLGQCRMLKKSGLVVEDQLFDTLPLEVKEALNQDVNVPFANGI.

The Cytoplasmic segment spans residues 1–22 (MFTLAEVASLNDIQPTYRILKP). The helical transmembrane segment at 23–48 (WWDVFMDYLAVVMLMVAIFAGTMQLT) threads the bilayer. Residues 49 to 164 (KDQVVCLPVL…YHLALPWYSK (116 aa)) lie on the Extracellular side of the membrane. Cys54 and Cys355 are oxidised to a cystine. The disordered stretch occupies residues 110 to 138 (IPLQATHPHAESTLPNQEAKKEKRDPTGR). Residues 127-138 (EAKKEKRDPTGR) show a composition bias toward basic and acidic residues. A helical transmembrane segment spans residues 165-183 (YFPYLALIHTIILMVSSNF). The Cytoplasmic portion of the chain corresponds to 184–309 (WFKYPKTCSK…EDSDLIYKLY (126 aa)). The tract at residues 222-252 (SEENKQRITGAQTLPKHVSTSSDEGSPSAST) is disordered. A compositionally biased stretch (polar residues) spans 228–252 (RITGAQTLPKHVSTSSDEGSPSAST). Phosphoserine occurs at positions 242, 243, and 247. Residues 310–331 (VVQTLIKTAKFIFILCYTANFV) traverse the membrane as a helical segment. Residues 332-361 (NAISFEHVCKPKVEHLTGYEVFECTHNMAY) lie on the Extracellular side of the membrane. A helical membrane pass occupies residues 362–387 (MLKKLLISYISIICVYGFICLYTLFW). Residues 388–859 (LFRIPLKEYS…DVNVPFANGI (472 aa)) lie on the Cytoplasmic side of the membrane. 13 LRR repeats span residues 515–535 (NLQELHLCHCPAKVEQTAFSF), 539–560 (HLRCLHVKFTDVAEIPAWVYLL), 562–583 (NLRELYLIGNLNSENNKMIGLE), 590–610 (HLKILHVKSNLTKVPSNITDV), 613–633 (HLTKLVIHNDGTKLLVLNSLK), 637–658 (NVAELELQNCELERIPHAIFSL), 660–681 (NLQELDLKSNNIRTIEEIISFQ), 685–706 (RLTCLKLWHNKIVAIPPSITHV), 708–729 (NLESLYFSNNKLESLPTAVFSL), 731–752 (KLRCLDVSYNNISTIPIEIGLL), 754–775 (NLQHLHITGNKVDILPKQLFKC), 777–798 (KLRTLNLGQNCIASLPEKISQL), and 800–821 (QLTQLELKGNCLDRLPAQLGQC).

The protein belongs to the LRRC8 family. In terms of assembly, heterohexamer; oligomerizes with other LRRC8 proteins (LRRC8A, LRRC8B, LRRC8C and/or LRRC8E) to form a heterohexamer. In vivo, the subunit composition may depend primarily on expression levels, and heterooligomeric channels containing various proportions of the different LRRC8 proteins may coexist. As to expression, expressed in pancreatic beta cells. Also expressed in glucagon-secreting pancreatic alpha cells.

It is found in the cell membrane. The protein resides in the endoplasmic reticulum membrane. It catalyses the reaction chloride(in) = chloride(out). It carries out the reaction iodide(out) = iodide(in). The enzyme catalyses taurine(out) = taurine(in). Non-essential component of the volume-regulated anion channel (VRAC, also named VSOAC channel), an anion channel required to maintain a constant cell volume in response to extracellular or intracellular osmotic changes. The VRAC channel conducts iodide better than chloride and can also conduct organic osmolytes like taurine. Plays a redundant role in the efflux of amino acids, such as aspartate, in response to osmotic stress family member (LRRC8B, LRRC8C, LRRC8D or LRRC8E); channel characteristics depend on the precise subunit composition. Also acts as a regulator of glucose-sensing in pancreatic beta cells: VRAC currents, generated in response to hypotonicity- or glucose-induced beta cell swelling, depolarize cells, thereby causing electrical excitation, leading to increase glucose sensitivity and insulin secretion. VRAC channels containing LRRC8D inhibit transport of immunoreactive cyclic dinucleotide GMP-AMP (2'-3'-cGAMP), an immune messenger produced in response to DNA virus in the cytosol. This Mus musculus (Mouse) protein is Volume-regulated anion channel subunit LRRC8D.